Consider the following 209-residue polypeptide: GTP cyclohydrolase-2 (209 aa).

49-53 (RIHSE) is a GTP binding site. The Zn(2+) site is built by Cys-54, Cys-65, and Cys-67. GTP contacts are provided by residues Gln-70, 92–94 (EGR), and Thr-114. Catalysis depends on Asp-126, which acts as the Proton acceptor. The active-site Nucleophile is Arg-128. 2 residues coordinate GTP: Thr-149 and Lys-154.

Belongs to the GTP cyclohydrolase II family. Zn(2+) is required as a cofactor.

It carries out the reaction GTP + 4 H2O = 2,5-diamino-6-hydroxy-4-(5-phosphoribosylamino)-pyrimidine + formate + 2 phosphate + 3 H(+). The protein operates within cofactor biosynthesis; riboflavin biosynthesis; 5-amino-6-(D-ribitylamino)uracil from GTP: step 1/4. Its function is as follows. Catalyzes the conversion of GTP to 2,5-diamino-6-ribosylamino-4(3H)-pyrimidinone 5'-phosphate (DARP), formate and pyrophosphate. In Shewanella halifaxensis (strain HAW-EB4), this protein is GTP cyclohydrolase-2.